A 225-amino-acid chain; its full sequence is Membrane protein (225 aa).

Residues 1-20 lie on the Virion surface side of the membrane; it reads MDNTTNCTLGTEQAVQLFKE. A helical membrane pass occupies residues 21-41; sequence YNLFVTAFLLFLTILLQYGYA. Over 42–51 the chain is Intravirion; that stretch reads TRNKVIYILK. Residues 52–72 form a helical membrane-spanning segment; it reads MIVLWCFWPLNIAVGAISCIY. The Virion surface portion of the chain corresponds to 73 to 77; that stretch reads PPNTG. Residues 78–98 form a helical membrane-spanning segment; sequence GLVAAIILTVFACLSFIGYWI. Residues 99–225 lie on the Intravirion side of the membrane; it reads QSFRLFKRCR…VATGGSSLYT (127 aa).

It belongs to the gammacoronaviruses M protein family. As to quaternary structure, homomultimer. Interacts with envelope E protein in the budding compartment of the host cell, which is located between endoplasmic reticulum and the Golgi complex. Forms a complex with HE and S proteins. Interacts with nucleocapsid N protein. This interaction probably participates in RNA packaging into the virus.

It is found in the virion membrane. Its subcellular location is the host Golgi apparatus membrane. Its function is as follows. Component of the viral envelope that plays a central role in virus morphogenesis and assembly via its interactions with other viral proteins. The polypeptide is Membrane protein (Avian infectious bronchitis virus (strain 6/82) (IBV)).